The chain runs to 264 residues: S-adenosylmethionine decarboxylase proenzyme (264 aa).

Serine 112 (schiff-base intermediate with substrate; via pyruvic acid) is an active-site residue. The residue at position 112 (serine 112) is a Pyruvic acid (Ser); by autocatalysis. The active-site Proton acceptor; for processing activity is histidine 117. The active-site Proton donor; for catalytic activity is the cysteine 140.

This sequence belongs to the prokaryotic AdoMetDC family. Type 2 subfamily. As to quaternary structure, heterooctamer of four alpha and four beta chains arranged as a tetramer of alpha/beta heterodimers. Pyruvate serves as cofactor. Is synthesized initially as an inactive proenzyme. Formation of the active enzyme involves a self-maturation process in which the active site pyruvoyl group is generated from an internal serine residue via an autocatalytic post-translational modification. Two non-identical subunits are generated from the proenzyme in this reaction, and the pyruvate is formed at the N-terminus of the alpha chain, which is derived from the carboxyl end of the proenzyme. The post-translation cleavage follows an unusual pathway, termed non-hydrolytic serinolysis, in which the side chain hydroxyl group of the serine supplies its oxygen atom to form the C-terminus of the beta chain, while the remainder of the serine residue undergoes an oxidative deamination to produce ammonia and the pyruvoyl group blocking the N-terminus of the alpha chain.

The enzyme catalyses S-adenosyl-L-methionine + H(+) = S-adenosyl 3-(methylsulfanyl)propylamine + CO2. It functions in the pathway amine and polyamine biosynthesis; S-adenosylmethioninamine biosynthesis; S-adenosylmethioninamine from S-adenosyl-L-methionine: step 1/1. Functionally, catalyzes the decarboxylation of S-adenosylmethionine to S-adenosylmethioninamine (dcAdoMet), the propylamine donor required for the synthesis of the polyamines spermine and spermidine from the diamine putrescine. The protein is S-adenosylmethionine decarboxylase proenzyme of Cronobacter sakazakii (strain ATCC BAA-894) (Enterobacter sakazakii).